A 207-amino-acid polypeptide reads, in one-letter code: Imidazole glycerol phosphate synthase subunit HisH (207 aa).

The 207-residue stretch at 1-207 (MIAIVDYNMG…ENFTKYRNLK (207 aa)) folds into the Glutamine amidotransferase type-1 domain. C79 acts as the Nucleophile in catalysis. Catalysis depends on residues H185 and E187.

As to quaternary structure, heterodimer of HisH and HisF.

It localises to the cytoplasm. It carries out the reaction 5-[(5-phospho-1-deoxy-D-ribulos-1-ylimino)methylamino]-1-(5-phospho-beta-D-ribosyl)imidazole-4-carboxamide + L-glutamine = D-erythro-1-(imidazol-4-yl)glycerol 3-phosphate + 5-amino-1-(5-phospho-beta-D-ribosyl)imidazole-4-carboxamide + L-glutamate + H(+). The enzyme catalyses L-glutamine + H2O = L-glutamate + NH4(+). It functions in the pathway amino-acid biosynthesis; L-histidine biosynthesis; L-histidine from 5-phospho-alpha-D-ribose 1-diphosphate: step 5/9. Its function is as follows. IGPS catalyzes the conversion of PRFAR and glutamine to IGP, AICAR and glutamate. The HisH subunit catalyzes the hydrolysis of glutamine to glutamate and ammonia as part of the synthesis of IGP and AICAR. The resulting ammonia molecule is channeled to the active site of HisF. The chain is Imidazole glycerol phosphate synthase subunit HisH from Sulfurimonas denitrificans (strain ATCC 33889 / DSM 1251) (Thiomicrospira denitrificans (strain ATCC 33889 / DSM 1251)).